A 228-amino-acid polypeptide reads, in one-letter code: MNNSTPVLQAKKLVKAYEEGDNELEVLRGVELTVNKGDILAIIGASGSGKSTLLNLLGGLDHATRGSVAIAGTSVASLNDRETGRLRNRYLGFVYQFHHLLPEFTALENVAMPLLIRGDKPSDCQARSAEILERVGLGPRLKHKPSALSGGERQRVAIARALVTEPALVMADEPTGNLDERTAAQVQALMIELNEKLGTAFMIVTHDREFAARCPQQYELHDGLLRRL.

An ABC transporter domain is found at 8–228 (LQAKKLVKAY…ELHDGLLRRL (221 aa)). 44-51 (GASGSGKS) contributes to the ATP binding site.

Belongs to the ABC transporter superfamily. Lipoprotein translocase (TC 3.A.1.125) family. As to quaternary structure, the complex is composed of two ATP-binding proteins (LolD) and two transmembrane proteins (LolC and LolE).

It localises to the cell inner membrane. Its function is as follows. Part of the ABC transporter complex LolCDE involved in the translocation of mature outer membrane-directed lipoproteins, from the inner membrane to the periplasmic chaperone, LolA. Responsible for the formation of the LolA-lipoprotein complex in an ATP-dependent manner. In Alcanivorax borkumensis (strain ATCC 700651 / DSM 11573 / NCIMB 13689 / SK2), this protein is Lipoprotein-releasing system ATP-binding protein LolD.